The sequence spans 238 residues: ATP synthase subunit a (238 aa).

The next 5 helical transmembrane spans lie at 18–38 (LTLL…VFWA), 76–96 (YSLL…LGLF), 114–134 (NLAF…IEGV), 166–186 (SLAI…GLIV), and 193–213 (VYWW…SVFI).

The protein belongs to the ATPase A chain family. As to quaternary structure, F-type ATPases have 2 components, CF(1) - the catalytic core - and CF(0) - the membrane proton channel. CF(1) has five subunits: alpha(3), beta(3), gamma(1), delta(1), epsilon(1). CF(0) has three main subunits: a(1), b(2) and c(9-12). The alpha and beta chains form an alternating ring which encloses part of the gamma chain. CF(1) is attached to CF(0) by a central stalk formed by the gamma and epsilon chains, while a peripheral stalk is formed by the delta and b chains.

The protein localises to the cell membrane. Functionally, key component of the proton channel; it plays a direct role in the translocation of protons across the membrane. The chain is ATP synthase subunit a from Streptococcus pyogenes serotype M49 (strain NZ131).